A 422-amino-acid chain; its full sequence is Replication factor C large subunit (422 aa).

ATP is bound at residue 63-70; the sequence is GPPGVGKT.

This sequence belongs to the activator 1 small subunits family. RfcL subfamily. In terms of assembly, heteromultimer composed of small subunits (RfcS) and large subunits (RfcL).

Part of the RFC clamp loader complex which loads the PCNA sliding clamp onto DNA. This chain is Replication factor C large subunit, found in Pyrobaculum arsenaticum (strain DSM 13514 / JCM 11321 / PZ6).